We begin with the raw amino-acid sequence, 180 residues long: UPF0227 protein YcfP (180 aa).

Belongs to the UPF0227 family.

The chain is UPF0227 protein YcfP from Escherichia coli O139:H28 (strain E24377A / ETEC).